Consider the following 206-residue polypeptide: Large ribosomal subunit protein uL4 (206 aa).

It belongs to the universal ribosomal protein uL4 family. Part of the 50S ribosomal subunit.

Functionally, one of the primary rRNA binding proteins, this protein initially binds near the 5'-end of the 23S rRNA. It is important during the early stages of 50S assembly. It makes multiple contacts with different domains of the 23S rRNA in the assembled 50S subunit and ribosome. Its function is as follows. Forms part of the polypeptide exit tunnel. The protein is Large ribosomal subunit protein uL4 of Cereibacter sphaeroides (strain KD131 / KCTC 12085) (Rhodobacter sphaeroides).